The following is a 332-amino-acid chain: Ketol-acid reductoisomerase (NADP(+)) (332 aa).

A KARI N-terminal Rossmann domain is found at 1–182; sequence MAVIYYDKDC…GSNRAGILET (182 aa). NADP(+)-binding positions include 25 to 28 and 83 to 86; these read YGAQ and DTSQ. Histidine 108 is an active-site residue. An NADP(+)-binding site is contributed by glycine 134. The 146-residue stretch at 183–328 folds into the KARI C-terminal knotted domain; sequence TFAEETETDL…AELRSMMSWL (146 aa). Aspartate 191, glutamate 195, glutamate 227, and glutamate 231 together coordinate Mg(2+). Residue serine 252 participates in substrate binding.

This sequence belongs to the ketol-acid reductoisomerase family. The cofactor is Mg(2+).

It catalyses the reaction (2R)-2,3-dihydroxy-3-methylbutanoate + NADP(+) = (2S)-2-acetolactate + NADPH + H(+). The catalysed reaction is (2R,3R)-2,3-dihydroxy-3-methylpentanoate + NADP(+) = (S)-2-ethyl-2-hydroxy-3-oxobutanoate + NADPH + H(+). It participates in amino-acid biosynthesis; L-isoleucine biosynthesis; L-isoleucine from 2-oxobutanoate: step 2/4. The protein operates within amino-acid biosynthesis; L-valine biosynthesis; L-valine from pyruvate: step 2/4. In terms of biological role, involved in the biosynthesis of branched-chain amino acids (BCAA). Catalyzes an alkyl-migration followed by a ketol-acid reduction of (S)-2-acetolactate (S2AL) to yield (R)-2,3-dihydroxy-isovalerate. In the isomerase reaction, S2AL is rearranged via a Mg-dependent methyl migration to produce 3-hydroxy-3-methyl-2-ketobutyrate (HMKB). In the reductase reaction, this 2-ketoacid undergoes a metal-dependent reduction by NADPH to yield (R)-2,3-dihydroxy-isovalerate. The polypeptide is Ketol-acid reductoisomerase (NADP(+)) (Dehalococcoides mccartyi (strain CBDB1)).